Here is a 482-residue protein sequence, read N- to C-terminus: Pancreatic lipase-related protein 2 (482 aa).

An N-terminal signal peptide occupies residues 1-30 (MPMDVRGCLFPSVQMLLCWLVSLLLATVGG). An intrachain disulfide couples Cys-34 to Cys-40. An N-linked (GlcNAc...) asparagine glycan is attached at Asn-92. The interval 106–118 (IHGFIDKGEEGWL) is required for galactolipase activity. Cys-122 and Cys-133 are disulfide-bonded. Ser-184 serves as the catalytic Nucleophile. Residue Asp-208 is the Charge relay system of the active site. Ca(2+) contacts are provided by Glu-219, Arg-222, Asp-224, and Asp-227. Cys-269 and Cys-293 form a disulfide bridge. Positions 270–292 (QKNILSTIVDINGIWEGTRNFAA) are required for galactolipase activity. Catalysis depends on His-295, which acts as the Charge relay system. Disulfide bonds link Cys-317-Cys-328 and Cys-331-Cys-336. N-linked (GlcNAc...) asparagine glycosylation is found at Asn-366 and Asn-441. The PLAT domain occupies 370–482 (WRYKVSVTLS…EDVLQSLYPC (113 aa)). Cysteines 466 and 482 form a disulfide.

The protein belongs to the AB hydrolase superfamily. Lipase family. Expressed in acinar cells of pancreas (at protein level).

Its subcellular location is the secreted. It localises to the zymogen granule membrane. The protein resides in the cell projection. It is found in the neuron projection. It catalyses the reaction a triacylglycerol + H2O = a diacylglycerol + a fatty acid + H(+). The enzyme catalyses a 1,2-diacyl-3-O-(beta-D-galactosyl)-sn-glycerol + 2 H2O = 3-beta-D-galactosyl-sn-glycerol + 2 a fatty acid + 2 H(+). The catalysed reaction is 1,2,3-tri-(9Z-octadecenoyl)-glycerol + H2O = di-(9Z)-octadecenoylglycerol + (9Z)-octadecenoate + H(+). It carries out the reaction di-(9Z)-octadecenoylglycerol + H2O = (9Z-octadecenoyl)-glycerol + (9Z)-octadecenoate + H(+). It catalyses the reaction (9Z-octadecenoyl)-glycerol + H2O = glycerol + (9Z)-octadecenoate + H(+). The enzyme catalyses 1-(9Z-octadecenoyl)-glycerol + H2O = glycerol + (9Z)-octadecenoate + H(+). The catalysed reaction is 1,2,3-tripropanoylglycerol + H2O = dipropanoylglycerol + propanoate + H(+). It carries out the reaction 1,2,3-tributanoylglycerol + H2O = dibutanoylglycerol + butanoate + H(+). It catalyses the reaction 1,2,3-trioctanoylglycerol + H2O = dioctanoylglycerol + octanoate + H(+). The enzyme catalyses 1,2-didecanoylglycerol + H2O = decanoylglycerol + decanoate + H(+). The catalysed reaction is long chain 1,2-diacyl-3-O-beta-D-galactosyl-sn-glycerol + H2O = long chain acyl-3-O-beta-D-galactosyl-sn-glycerol + a fatty acid + H(+). It carries out the reaction 1,2-dioctanoyl-3-O-beta-D-galactosyl-sn-glycerol + H2O = octanoyl-3-(beta-D-galactosyl)-sn-glycerol + octanoate + H(+). It catalyses the reaction 1,2-didodecanoyl-3-beta-D-galactosyl-sn-glycerol + H2O = dodecanoyl-3-beta-D-galactosyl-sn-glycerol + dodecanoate + H(+). The enzyme catalyses 1-beta-D-galactosyl-2,3-didodecanoyl-sn-glycerol + H2O = 1-beta-D-galactosyl-dodecanoyl-sn-glycerol + dodecanoate + H(+). The catalysed reaction is a 1,2-diacyl-3-O-[alpha-D-galactosyl-(1-&gt;6)-beta-D-galactosyl]-sn-glycerol + H2O = acyl-3-O-[alpha-D-galactosyl-(1-&gt;6)-beta-D-galactosyl]-sn-glycerol + a fatty acid + H(+). It carries out the reaction long chain 1,2-diacyl-3-O-[alpha-D-galactosyl-(1-&gt;6)-beta-D-galactosyl]-sn-glycerol + H2O = long chain acyl-3-O-[alpha-D-galactosyl-(1-&gt;6)-beta-D-galactosyl]-sn-glycerol + a fatty acid + H(+). It catalyses the reaction 1,2-dioctanoyl-3-O-[alpha-D-galactosyl-(1-&gt;6)-beta-D-galactosyl]-sn-glycerol + H2O = octanoyl-3-O-[alpha-D-galactosyl-(1-&gt;6)-beta-D-galactosyl]-sn-glycerol + octanoate + H(+). The enzyme catalyses 1,2-didodecanoyl-3-O-[alpha-D-galactosyl-(1-&gt;6)-beta-D-galactosyl]-sn-glycerol + H2O = dodecanoyl-3-O-[alpha-D-galactosyl-(1-&gt;6)-beta-D-galactosyl]-sn-glycerol + dodecanoate + H(+). The catalysed reaction is a 1,2-diacyl-sn-glycero-3-phosphocholine + H2O = a monoacyl-sn-glycero-3-phosphocholine + a fatty acid + H(+). Its pathway is glycerolipid metabolism; triacylglycerol degradation. It participates in glycolipid metabolism. With respect to regulation, CLPS stimulates triacylglycerol lipase activity. Triacylglycerol lipase activity is not inhibited by increasing bile salt concentration. Its function is as follows. Lipase that primarily hydrolyzes triglycerides and galactosylglycerides. In neonates, may play a major role in pancreatic digestion of dietary fats such as milk fat globules enriched in long-chain triglycerides. Hydrolyzes short-, medium- and long-chain fatty acyls in triglycerides without apparent positional specificity. Can completely deacylate triacylglycerols. When the liver matures and bile salt synthesis increases, likely functions mainly as a galactolipase and monoacylglycerol lipase. Hydrolyzes monogalactosyldiglycerols (MGDG) and digalactosyldiacylglycerols (DGDG) present in a plant-based diet, releasing long-chain polyunsaturated fatty acids. Hydrolyzes medium- and long-chain fatty acyls in galactolipids. May act together with LIPF to hydrolyze partially digested triglycerides. Hydrolyzes long-chain monoglycerides with high efficiency. In cytotoxic T cells, contributes to perforin-dependent cell lysis, but is unlikely to mediate direct cytotoxicity. Also has low phospholipase activity. In neurons, required for the localization of the phospholipid 1-oleoyl-2-palmitoyl-PC (OPPC) to neurite tips through acyl chain remodeling of membrane phospholipids. The resulting OPPC-rich lipid membrane domain recruits the t-SNARE protein STX4 by selectively interacting with the STX4 transmembrane domain and this promotes surface expression of the dopamine transporter SLC6A3/DAT at neurite tips by facilitating fusion of SLC6A3-containing transport vesicles with the plasma membrane. This Mus musculus (Mouse) protein is Pancreatic lipase-related protein 2.